Here is an 857-residue protein sequence, read N- to C-terminus: Protein app1 (857 aa).

The region spanning 6–133 (DTSTHGAEIR…NMDDIIRRVA (128 aa)) is the ADF-H domain. 3 disordered regions span residues 167–562 (AKVA…VPQR), 585–622 (EVPS…VPQR), and 693–723 (QLNE…TEHT). Residues 193–204 (KDSKDNSWDDSS) are compositionally biased toward basic and acidic residues. Residues 205–217 (KQSNTQTANTTSN) are compositionally biased toward low complexity. The segment covering 229–240 (AGRKEKSQENKP) has biased composition (basic and acidic residues). Polar residues-rich tracts occupy residues 276 to 295 (SIST…SHAP), 371 to 385 (PPAS…SPST), 399 to 409 (KQVSSNETSAQ), 443 to 452 (KISSFNSKAG), and 498 to 511 (SSAS…SVIT). A compositionally biased stretch (low complexity) spans 522-561 (VVPEAPSVHQPPAAPVAPEVPSAPQRPAAPVVPEAPSVPQ). Pro residues-rich tracts occupy residues 587–596 (PSVPQPPVAP) and 602–611 (PSVPQPPVAP). The span at 612 to 622 (VAPEVPSVPQR) shows a compositional bias: low complexity. 2 consecutive SH3 domains span residues 725 to 785 (PTKT…ITGP) and 800 to 857 (GPGK…VEEI).

This Schizosaccharomyces pombe (strain 972 / ATCC 24843) (Fission yeast) protein is Protein app1 (app1).